Reading from the N-terminus, the 1189-residue chain is Pumilio homolog 1 (1189 aa).

Residue Ser-2 is modified to N-acetylserine. Position 19 is a phosphoserine (Ser-19). Positions 22–73 (LKHHPQEPANPNMPVVLTSGTGSQAQPQPAANQALAAGTHSSPVPGSIGVAG) are disordered. Residues 45–58 (QAQPQPAANQALAA) show a composition bias toward low complexity. Phosphoserine occurs at positions 75, 98, and 106. A Phosphothreonine modification is found at Thr-112. Residues Ser-124, Ser-159, Ser-197, Ser-209, and Ser-229 each carry the phosphoserine modification. The segment at 233–272 (SCLRKGGFGPRDADSDENDKGEKKNKGTFDGDKLGDLKEE) is disordered. Residues 250–272 (NDKGEKKNKGTFDGDKLGDLKEE) show a composition bias toward basic and acidic residues. Ser-305 is subject to Phosphoserine. Residues 491 to 503 (QQSAPQAQQGQQQ) are compositionally biased toward low complexity. 2 disordered regions span residues 491–525 (QQSA…GQQT) and 614–647 (AGTT…SSFY). Positions 512 to 525 (RPLTPNQNQQGQQT) are enriched in polar residues. A Phosphothreonine modification is found at Thr-515. Residues 627 to 647 (QQPQPQPQQQPSNNLASSSFY) show a composition bias toward low complexity. Residues Ser-710 and Ser-715 each carry the phosphoserine modification. Residues 743–773 (GPVGMPLPSQGPGHSQTPPPSLSSHGSSSSL) form a disordered region. Positions 764–773 (LSSHGSSSSL) are enriched in low complexity. Arg-797 carries the post-translational modification Omega-N-methylarginine. Phosphoserine is present on residues Ser-807 and Ser-823. The region spanning 829-1171 (GRSRLLEDFR…HILAKLEKYY (343 aa)) is the PUM-HD domain. Pumilio repeat units lie at residues 849-884 (EIAG…LVFN), 885-920 (EILQ…ALAE), 921-958 (RIRG…EMVR), 959-994 (ELDG…FIID), 995-1030 (AFKG…PILE), 1031-1066 (ELHQ…KIVA), 1067-1102 (EIRG…VLID), and 1106-1145 (TMND…IVMH). The tract at residues 864–868 (SRFIQ) is adenine-nucleotide binding in RNA target. Positions 900 to 904 (NYVIQ) are uracil-nucleotide binding in RNA target. Residues 936-940 (CRVIQ) are adenine-nucleotide binding in RNA target. The tract at residues 974-978 (NHVVQ) is non-specific-nucleotide binding in RNA target. The segment at 1010 to 1014 (CRVIQ) is adenine-nucleotide binding in RNA target. A uracil-nucleotide binding in RNA target region spans residues 1046–1050 (NYVIQ). 2 guanine-nucleotide binding in RNA target regions span residues 1082–1086 (SNVVE) and 1083–1086 (NVVE). Residues 1125 to 1129 (NYVVQ) are uracil-nucleotide binding in RNA target.

Recruits the CCR4-POP2-NOT deadenylase leading to translational inhibition and mRNA degradation. Interacts with TRIM71 (via NHL repeats) in an RNA-dependent manner. Phosphorylation at Ser-715 promotes RNA-binding activity. Following growth factor stimulation phosphorylated at Ser-715, promoting binding to the 3'-UTR of CDKN1B/p27 mRNA. Widely expressed. Expressed in brain, heart, kidney, liver, lung, skin, intestine, spleen, testis and thymus. Weakly or not expressed in muscles and stomach. Expressed at various stages of myeloid and lymphoid cell development. Highly expressed in testis. Expressed in all major brain regions (at protein level).

The protein localises to the cytoplasm. It is found in the P-body. The protein resides in the cytoplasmic granule. Functionally, sequence-specific RNA-binding protein that acts as a post-transcriptional repressor by binding the 3'-UTR of mRNA targets. Binds to an RNA consensus sequence, the Pumilio Response Element (PRE), 5'-UGUANAUA-3', that is related to the Nanos Response Element (NRE). Mediates post-transcriptional repression of transcripts via different mechanisms: acts via direct recruitment of the CCR4-POP2-NOT deadenylase leading to translational inhibition and mRNA degradation. Also mediates deadenylation-independent repression by promoting accessibility of miRNAs. Following growth factor stimulation, phosphorylated and binds to the 3'-UTR of CDKN1B/p27 mRNA, inducing a local conformational change that exposes miRNA-binding sites, promoting association of miR-221 and miR-222, efficient suppression of CDKN1B/p27 expression, and rapid entry to the cell cycle. Acts as a post-transcriptional repressor of E2F3 mRNAs by binding to its 3'-UTR and facilitating miRNA regulation. Represses a program of genes necessary to maintain genomic stability such as key mitotic, DNA repair and DNA replication factors. Its ability to repress those target mRNAs is regulated by the lncRNA NORAD (non-coding RNA activated by DNA damage) which, due to its high abundance and multitude of PUMILIO binding sites, is able to sequester a significant fraction of PUM1 and PUM2 in the cytoplasm. Involved in neuronal functions by regulating ATXN1 mRNA levels: acts by binding to the 3'-UTR of ATXN1 transcripts, leading to their down-regulation independently of the miRNA machinery. In testis, acts as a post-transcriptional regulator of spermatogenesis by binding to the 3'-UTR of mRNAs coding for regulators of p53/TP53. Involved in embryonic stem cell renewal by facilitating the exit from the ground state: acts by targeting mRNAs coding for naive pluripotency transcription factors and accelerates their down-regulation at the onset of differentiation. Binds specifically to miRNA MIR199A precursor, with PUM2, regulates miRNA MIR199A expression at a postranscriptional level. The sequence is that of Pumilio homolog 1 from Mus musculus (Mouse).